The following is a 350-amino-acid chain: Beta-ketodecanoyl-[acyl-carrier-protein] synthase (350 aa).

Residue Cys-133 is part of the active site.

The protein belongs to the thiolase-like superfamily. Beta-ketoacyl-ACP synthases family.

The enzyme catalyses octanoyl-CoA + malonyl-[ACP] + H(+) = 3-oxodecanoyl-[ACP] + CO2 + CoA. The protein operates within lipid metabolism; fatty acid biosynthesis. Catalyzes the condensation of octanoyl-CoA, obtained from exogenously supplied fatty acids via beta-oxidation, with malonyl-[acyl-carrier protein], forming 3-oxodecanoyl-[acyl-carrier protein], an intermediate of the fatty acid elongation cycle that can then be extended to supply all of the cellular fatty acid needs. The enzyme thereby shunts fatty acid degradation intermediates from the beta-oxidation pathway into de novo fatty acid biosynthesis. The protein is Beta-ketodecanoyl-[acyl-carrier-protein] synthase of Pseudomonas aeruginosa (strain ATCC 15692 / DSM 22644 / CIP 104116 / JCM 14847 / LMG 12228 / 1C / PRS 101 / PAO1).